Here is a 483-residue protein sequence, read N- to C-terminus: ATP synthase subunit beta (483 aa).

ATP is bound at residue 162–169 (GGAGVGKT).

Belongs to the ATPase alpha/beta chains family. As to quaternary structure, F-type ATPases have 2 components, CF(1) - the catalytic core - and CF(0) - the membrane proton channel. CF(1) has five subunits: alpha(3), beta(3), gamma(1), delta(1), epsilon(1). CF(0) has four main subunits: a(1), b(1), b'(1) and c(9-12).

It localises to the cellular thylakoid membrane. It catalyses the reaction ATP + H2O + 4 H(+)(in) = ADP + phosphate + 5 H(+)(out). In terms of biological role, produces ATP from ADP in the presence of a proton gradient across the membrane. The catalytic sites are hosted primarily by the beta subunits. The polypeptide is ATP synthase subunit beta (Prochloron didemni).